We begin with the raw amino-acid sequence, 108 residues long: DNA-directed RNA polymerase III subunit RPC10 (108 aa).

Zn(2+) contacts are provided by cysteine 5, cysteine 8, cysteine 25, cysteine 28, cysteine 69, and cysteine 72. Residues 5 to 28 (CPGCGNGLIVEEGQRCHRFACNTC) form a C4-type zinc finger. The TFIIS-type zinc-finger motif lies at 65–107 (TAEPCPKCEHPRAYFMQLQTRSADEPMTTFYKCCNAQCGHRWR). The Hairpin motif lies at 88-89 (DE). Zn(2+) contacts are provided by cysteine 98 and cysteine 102.

The protein belongs to the archaeal RpoM/eukaryotic RPA12/RPB9/RPC11 RNA polymerase family. In terms of assembly, component of the RNA polymerase III complex consisting of 17 subunits: a ten-subunit horseshoe-shaped catalytic core composed of POLR3A/RPC1, POLR3B/RPC2, POLR1C/RPAC1, POLR1D/RPAC2, POLR3K/RPC10, POLR2E/RPABC1, POLR2F/RPABC2, POLR2H/RPABC3, POLR2K/RPABC4 and POLR2L/RPABC5; a mobile stalk composed of two subunits POLR3H/RPC8 and CRCP/RPC9, protruding from the core and functioning primarily in transcription initiation; and additional subunits homologous to general transcription factors of the RNA polymerase II machinery, POLR3C/RPC3-POLR3F/RPC6-POLR3G/RPC7 heterotrimer required for transcription initiation and POLR3D/RPC4-POLR3E/RPC5 heterodimer involved in both transcription initiation and termination.

The protein resides in the nucleus. In terms of biological role, core component of RNA polymerase III (Pol III) which synthesizes small non-coding RNAs using the four ribonucleoside triphosphates as substrates. Can mediate Pol I proofreading of the nascent RNA transcript. Anchors into the Pol III active site to constantly monitor transcription fidelity, cleaves mis-incorporated 5'-ribonucleotides and restarts the transcription process. Once Pol III reaches the poly(dT) termination signal, can induce Pol III clamp opening and transcription termination. Pol III plays an important role in sensing and limiting infection by intracellular bacteria and DNA viruses. Acts as a nuclear and cytosolic DNA sensor involved in innate immune response. Can sense non-self dsDNA that serves as template for transcription into dsRNA. The non-self RNA polymerase III transcripts, such as Epstein-Barr virus-encoded RNAs (EBERs) induce type I interferon and NF-kappa-B through the RIG-I pathway. The chain is DNA-directed RNA polymerase III subunit RPC10 from Mus musculus (Mouse).